Consider the following 544-residue polypeptide: Phenylalanine--tRNA ligase beta subunit (544 aa).

Positions 270 to 346 (LEPKTRFLTK…KGYGYENIKV (77 aa)) constitute a B5 domain. Mg(2+)-binding residues include D324, D330, E333, and D334.

The protein belongs to the phenylalanyl-tRNA synthetase beta subunit family. Type 2 subfamily. As to quaternary structure, tetramer of two alpha and two beta subunits. Requires Mg(2+) as cofactor.

Its subcellular location is the cytoplasm. The catalysed reaction is tRNA(Phe) + L-phenylalanine + ATP = L-phenylalanyl-tRNA(Phe) + AMP + diphosphate + H(+). The chain is Phenylalanine--tRNA ligase beta subunit from Methanosarcina barkeri (strain Fusaro / DSM 804).